A 707-amino-acid polypeptide reads, in one-letter code: Elongation factor G (707 aa).

The 290-residue stretch at 8-297 (ERVRNIGIAA…AVVDYLPSPV (290 aa)) folds into the tr-type G domain. Residues 17–24 (AHIDAGKT), 96–100 (DTPGH), and 150–153 (NKMD) contribute to the GTP site.

It belongs to the TRAFAC class translation factor GTPase superfamily. Classic translation factor GTPase family. EF-G/EF-2 subfamily.

It is found in the cytoplasm. In terms of biological role, catalyzes the GTP-dependent ribosomal translocation step during translation elongation. During this step, the ribosome changes from the pre-translocational (PRE) to the post-translocational (POST) state as the newly formed A-site-bound peptidyl-tRNA and P-site-bound deacylated tRNA move to the P and E sites, respectively. Catalyzes the coordinated movement of the two tRNA molecules, the mRNA and conformational changes in the ribosome. This Synechococcus sp. (strain JA-2-3B'a(2-13)) (Cyanobacteria bacterium Yellowstone B-Prime) protein is Elongation factor G.